Consider the following 254-residue polypeptide: 3-deoxy-manno-octulosonate cytidylyltransferase (254 aa).

This sequence belongs to the KdsB family.

The protein localises to the cytoplasm. It carries out the reaction 3-deoxy-alpha-D-manno-oct-2-ulosonate + CTP = CMP-3-deoxy-beta-D-manno-octulosonate + diphosphate. The protein operates within nucleotide-sugar biosynthesis; CMP-3-deoxy-D-manno-octulosonate biosynthesis; CMP-3-deoxy-D-manno-octulosonate from 3-deoxy-D-manno-octulosonate and CTP: step 1/1. Its pathway is bacterial outer membrane biogenesis; lipopolysaccharide biosynthesis. Activates KDO (a required 8-carbon sugar) for incorporation into bacterial lipopolysaccharide in Gram-negative bacteria. The sequence is that of 3-deoxy-manno-octulosonate cytidylyltransferase from Haemophilus influenzae (strain ATCC 51907 / DSM 11121 / KW20 / Rd).